A 91-amino-acid polypeptide reads, in one-letter code: Ribonuclease P protein component 4 (91 aa).

C55, C58, C78, and C81 together coordinate Zn(2+).

The protein belongs to the eukaryotic/archaeal RNase P protein component 4 family. As to quaternary structure, consists of a catalytic RNA component and at least 4-5 protein subunits. It depends on Zn(2+) as a cofactor.

The protein resides in the cytoplasm. The enzyme catalyses Endonucleolytic cleavage of RNA, removing 5'-extranucleotides from tRNA precursor.. Its function is as follows. Part of ribonuclease P, a protein complex that generates mature tRNA molecules by cleaving their 5'-ends. This is Ribonuclease P protein component 4 from Thermoplasma acidophilum (strain ATCC 25905 / DSM 1728 / JCM 9062 / NBRC 15155 / AMRC-C165).